A 460-amino-acid chain; its full sequence is tRNA (guanine(10)-N(2))-methyltransferase TRMT11 (460 aa).

The residue at position 2 (Ala-2) is an N-acetylalanine.

Belongs to the class I-like SAM-binding methyltransferase superfamily. TRM11 methyltransferase family. In terms of assembly, part of the heterodimeric TRMT11-TRM112 methyltransferase complex; this complex forms an active tRNA methyltransferase, where TRMT112 acts as an activator of the catalytic subunit TRMT11.

The protein localises to the cytoplasm. The catalysed reaction is guanosine(10) in tRNA + S-adenosyl-L-methionine = N(2)-methylguanosine(10) in tRNA + S-adenosyl-L-homocysteine + H(+). Catalytic subunit of the TRMT11-TRM112 methyltransferase complex, that specifically mediates the S-adenosyl-L-methionine-dependent N(2)-methylation of guanosine nucleotide at position 10 (m2G10) in tRNAs. This is one of the major tRNA (guanine-N(2))-methyltransferases. This Mus musculus (Mouse) protein is tRNA (guanine(10)-N(2))-methyltransferase TRMT11.